We begin with the raw amino-acid sequence, 179 residues long: Transcription initiation factor TFIID subunit 10 (179 aa).

Residues 1-23 (MNDPEQYEPSSSTESVLMPPPAL) form a disordered region.

This sequence belongs to the TAF10 family. As to quaternary structure, component of the TFIID basal transcription factor complex, composed of TATA-box-binding protein tbp-1, and a number of TBP-associated factors (TAFs).

It localises to the nucleus. Its function is as follows. The TFIID basal transcription factor complex plays a major role in the initiation of RNA polymerase II (Pol II)-dependent transcription. TFIID recognizes and binds promoters via its subunit tbp-1, a TATA-box-binding protein, and promotes assembly of the pre-initiation complex (PIC). The TFIID complex consists of tbp-1 and TBP-associated factors (TAFs), including taf-10. Essential for early embryonic development, but not required for transcription of some genes; probably acts via activating transcription initiation by RNA Pol II, as part of the TFIID complex. This chain is Transcription initiation factor TFIID subunit 10, found in Caenorhabditis elegans.